Here is a 107-residue protein sequence, read N- to C-terminus: Cytochrome c-550 (107 aa).

Heme c is bound by residues cysteine 11, cysteine 14, histidine 15, and methionine 80.

Post-translationally, binds 1 heme c group covalently per subunit.

This chain is Cytochrome c-550, found in Ancylobacter novellus (Thiobacillus novellus).